Reading from the N-terminus, the 208-residue chain is Ribosome maturation factor RimP (208 aa).

The tract at residues 175 to 208 (GEDVEDLVADPGADDELDELDELDELDDGDEDEQ) is disordered. The segment covering 177 to 208 (DVEDLVADPGADDELDELDELDELDDGDEDEQ) has biased composition (acidic residues).

This sequence belongs to the RimP family.

The protein resides in the cytoplasm. Its function is as follows. Required for maturation of 30S ribosomal subunits. The protein is Ribosome maturation factor RimP of Kineococcus radiotolerans (strain ATCC BAA-149 / DSM 14245 / SRS30216).